Reading from the N-terminus, the 186-residue chain is Elongation factor P (186 aa).

Belongs to the elongation factor P family.

Its subcellular location is the cytoplasm. It participates in protein biosynthesis; polypeptide chain elongation. Involved in peptide bond synthesis. Stimulates efficient translation and peptide-bond synthesis on native or reconstituted 70S ribosomes in vitro. Probably functions indirectly by altering the affinity of the ribosome for aminoacyl-tRNA, thus increasing their reactivity as acceptors for peptidyl transferase. The protein is Elongation factor P of Prochlorococcus marinus (strain MIT 9312).